The following is a 333-amino-acid chain: 4-hydroxyproline epimerase (333 aa).

Residue Cys-90 is the Proton acceptor of the active site. Residues 91–92 (GH) and Asp-249 contribute to the substrate site. Cys-253 (proton donor) is an active-site residue. 254-255 (GT) contributes to the substrate binding site.

It belongs to the proline racemase family. As to quaternary structure, homodimer.

It catalyses the reaction trans-4-hydroxy-L-proline = cis-4-hydroxy-D-proline. In terms of biological role, allows intracellular utilization of 4-hydroxyproline, one of the major constituents of host collagen, by converting 4-hydroxy-L-proline to 4-hydroxy-D-proline, which can be further metabolized by intracellular 4-hydroxy-D-proline oxidases. Strong B-cell mitogen. Plays an important role in the regulation of intra- and extracellular amino acid pools, allowing the bacterium to profit from host precursors and enzymatic pathways. The chain is 4-hydroxyproline epimerase from Brucella abortus (strain S19).